A 905-amino-acid chain; its full sequence is DNA gyrase subunit A (905 aa).

The 490-residue stretch at 35–524 (IPDVRDGLKP…GEFDQDIEDL (490 aa)) folds into the Topo IIA-type catalytic domain. The O-(5'-phospho-DNA)-tyrosine intermediate role is filled by Tyr123. The GyrA-box signature appears at 551–557 (QKRGGKG).

This sequence belongs to the type II topoisomerase GyrA/ParC subunit family. Heterotetramer, composed of two GyrA and two GyrB chains. In the heterotetramer, GyrA contains the active site tyrosine that forms a transient covalent intermediate with DNA, while GyrB binds cofactors and catalyzes ATP hydrolysis.

It is found in the cytoplasm. The enzyme catalyses ATP-dependent breakage, passage and rejoining of double-stranded DNA.. In terms of biological role, a type II topoisomerase that negatively supercoils closed circular double-stranded (ds) DNA in an ATP-dependent manner to modulate DNA topology and maintain chromosomes in an underwound state. Negative supercoiling favors strand separation, and DNA replication, transcription, recombination and repair, all of which involve strand separation. Also able to catalyze the interconversion of other topological isomers of dsDNA rings, including catenanes and knotted rings. Type II topoisomerases break and join 2 DNA strands simultaneously in an ATP-dependent manner. This chain is DNA gyrase subunit A, found in Rickettsia typhi (strain ATCC VR-144 / Wilmington).